We begin with the raw amino-acid sequence, 1186 residues long: MTCLDPKTIWPNEAVPNVRYRDFSKMVLFTAGDEDQFERKRSYKNGTNPDKKVSLDGNIWTNLFVPNEGLETEFWNGYNLNASSTINTFDYMFNKFKKGIFVKIVDNKVVTFLPFSKHGYKNDWGDLMKYDPSKYKSMIDFMRHVSNQTAIANNKNYKFKPDQVSRYTNQWYSNNCLIRYEHPLSEGDTNVVTLRHMFDELCATREVPDIELFINRRDFPLLTKNGTEPYYNIFGKDHSLDSKSLKLISEGMCPILSMCTSDMYADIVIPTHEDWARVASTEGVKTHVGDKENNENSLPKKITFPPQCKDYSKDNFNTPWEKRIPTAVFRGGSTGCGVSSDTNLETFNQRLVAAKISYNSKPDKYNVPLITAGITKWNLRPRKILNEKYLQTINIEKEAPKVSPLTPEEQSKYKYIINIDGHVSAFRLSLEMSMGCCILLVKSKIPNETFGWKMWFSHLLKPYIHYVPVKSDLSDLIEKIQWCRDNDEKCKEISQEALKFYQTYLSRESILDYMQNLMVKLKLSFPTNEIVYGTDPLFIQNSVQSKYLFNMMNNSINPIFPFLTPYLIPKPIPIYNILGTSLRGSYGWSKGYSMFLKHMFKPTIPKEKDNLKENANQNERKLNEKLNEESRVFTENQQENDWEMKRSTINLKGVFEKRLFENKKSTVDLYSISGSNVVKKSTSDAQGMIEHINEAFISDTCINNLLKIIPNFAWSFAFEKSLNENGVEQCTLLNEYIEGETFSTSIKNKMSYLGFSSGKPFKNVLEVLFQIILSIQFAQEQCGFIHNDLTPWNIIIQTLKEPITIQYPLFSGIYKIITKHVPVIIDYGKSHVATSPYGDFCFNELSVGNVIHYGVVNMFNMIECQDVFSIILYSCLDMLTVNGTKFSQRENDETEYDEQSIIKMLNFFSPTELKTRKEALSFIYQYKKYENLIKAHETINLEKSPIEFIKYFTSIFKKEKVVYGLSRLDSKRTGLIMDFNNPKQIFDEAFAQNIQEVYISFLNVPQNLYKCTLPQPKTKIELYMVAQLLIKCLKDTLKDYRIFAEKSSLRKESFHNDIIKFENAINFITTFYSKEISKHGNDSWVIPELCENNQIEISRNYFRTTSDTLNYSIKPCTDLTFFKKTILNILNWTDDEGLFEIKAEDRVEISTQLKFVLESTFKDKKISANNNTYIVYKKYCNKKYCI.

This is an uncharacterized protein from Acheta domesticus (House cricket).